Consider the following 392-residue polypeptide: Chorismate synthase (392 aa).

Arg40 and Arg46 together coordinate NADP(+). FMN-binding positions include 135-137 (RAS), 256-257 (QA), Gly300, 315-319 (KPIAT), and Arg341.

This sequence belongs to the chorismate synthase family. As to quaternary structure, homotetramer. FMNH2 is required as a cofactor.

The catalysed reaction is 5-O-(1-carboxyvinyl)-3-phosphoshikimate = chorismate + phosphate. Its pathway is metabolic intermediate biosynthesis; chorismate biosynthesis; chorismate from D-erythrose 4-phosphate and phosphoenolpyruvate: step 7/7. Catalyzes the anti-1,4-elimination of the C-3 phosphate and the C-6 proR hydrogen from 5-enolpyruvylshikimate-3-phosphate (EPSP) to yield chorismate, which is the branch point compound that serves as the starting substrate for the three terminal pathways of aromatic amino acid biosynthesis. This reaction introduces a second double bond into the aromatic ring system. This Nocardioides sp. (strain ATCC BAA-499 / JS614) protein is Chorismate synthase.